Consider the following 556-residue polypeptide: Secreted RxLR effector protein 114 (556 aa).

The first 19 residues, 1-19 (MCGAHFVAIALLVAAGCQT), serve as a signal peptide directing secretion. 3 disordered regions span residues 43–76 (LQSR…GVLK), 108–138 (NQLK…DSDK), and 389–408 (NDKS…EDWN). The short motif at 46–66 (RNLRESRDSKDDLLSAGDEER) is the RxLR-dEER element. Basic and acidic residues predominate over residues 47-67 (NLRESRDSKDDLLSAGDEERT).

The protein belongs to the RxLR effector family.

Its subcellular location is the secreted. The protein localises to the host cell. Its function is as follows. Secreted effector that partially suppresses the host cell death induced by cell death-inducing proteins. This chain is Secreted RxLR effector protein 114, found in Plasmopara viticola (Downy mildew of grapevine).